We begin with the raw amino-acid sequence, 182 residues long: Small ribosomal subunit protein uS4c (182 aa).

The S4 RNA-binding domain occupies 82–143; that stretch reads MRLDNILFRL…KQRSKALIQN (62 aa).

Belongs to the universal ribosomal protein uS4 family. As to quaternary structure, part of the 30S ribosomal subunit. Contacts protein S5. The interaction surface between S4 and S5 is involved in control of translational fidelity.

The protein localises to the plastid. It localises to the chloroplast. One of the primary rRNA binding proteins, it binds directly to 16S rRNA where it nucleates assembly of the body of the 30S subunit. Functionally, with S5 and S12 plays an important role in translational accuracy. In Isophysis tasmanica, this protein is Small ribosomal subunit protein uS4c (rps4).